A 238-amino-acid chain; its full sequence is UPF0280 protein Msm_0088 (238 aa).

The protein belongs to the UPF0280 family.

The protein is UPF0280 protein Msm_0088 of Methanobrevibacter smithii (strain ATCC 35061 / DSM 861 / OCM 144 / PS).